Here is a 292-residue protein sequence, read N- to C-terminus: Syntenin-2 (292 aa).

PDZ domains lie at 108–187 (EIHL…IRDR) and 192–267 (TVTM…IPTV).

As to quaternary structure, monomer and homodimer. Interacts with SDCBP. Interacts with TM4SF1.

The protein resides in the cytoplasm. It is found in the nucleus. It localises to the nucleolus. Its subcellular location is the nucleoplasm. The protein localises to the cell membrane. The protein resides in the nucleus speckle. Its function is as follows. Binds phosphatidylinositol 4,5-bisphosphate (PIP2). May play a role in the organization of nuclear PIP2, cell division and cell survival. The protein is Syntenin-2 (Sdcbp2) of Mus musculus (Mouse).